The chain runs to 118 residues: Late cornified envelope protein 1B (118 aa).

Residues 87-118 (CHRPQSSGCCSQPSGGSSCCGGGSGQHSGGCC) form a disordered region. Low complexity predominate over residues 90–103 (PQSSGCCSQPSGGS). A compositionally biased stretch (gly residues) spans 104–118 (SCCGGGSGQHSGGCC).

The protein belongs to the LCE family. As to quaternary structure, interacts with CYSRT1; the interaction is direct. As to expression, skin-specific. Expression was readily detected in adult trunk skin, adult arm skin, fetal skin, penal skin, vulva, esophagus and tongue. Not expressed in the cervix, rectum, lung, colon, or placenta.

Functionally, precursors of the cornified envelope of the stratum corneum. The protein is Late cornified envelope protein 1B (LCE1B) of Homo sapiens (Human).